Consider the following 251-residue polypeptide: MEPIIEIENFSAYYGEKIAVKNVTMKIFKNQITAIIGPSGCGKTTLLRSINRMNDHLPGFRVEGKIYFKGQDIYDPQLDVTEYRKRVGMVFQKPTPFPMSIYDNVAFGPRIHGVKSKHILDRIVEESLKKAALWDEVKSELNKSGTRLSGGQQQRLCIARALAVEPEVILLDEPTSALDPIATQRIEKLLEELSENYTIVIVTHNIGQAIRIADYIAFMYRGELIEYGPTREIVERPKNRLTEEYLTGKIG.

Residues 5 to 246 enclose the ABC transporter domain; the sequence is IEIENFSAYY…PKNRLTEEYL (242 aa). Position 37 to 44 (37 to 44) interacts with ATP; that stretch reads GPSGCGKT.

It belongs to the ABC transporter superfamily. Phosphate importer (TC 3.A.1.7) family. As to quaternary structure, the complex is composed of two ATP-binding proteins (PstB), two transmembrane proteins (PstC and PstA) and a solute-binding protein (PstS).

Its subcellular location is the cell inner membrane. The catalysed reaction is phosphate(out) + ATP + H2O = ADP + 2 phosphate(in) + H(+). In terms of biological role, part of the ABC transporter complex PstSACB involved in phosphate import. Responsible for energy coupling to the transport system. The protein is Phosphate import ATP-binding protein PstB of Thermotoga maritima (strain ATCC 43589 / DSM 3109 / JCM 10099 / NBRC 100826 / MSB8).